The chain runs to 289 residues: MDYLVKAIAYDGKVRAYAANTTETIHEAQRRHNTWPTASAALGRTMTAAVMLGAMLKGEDKLTVKIEGGGPIGAIVADGNAKGDVRGYVSNPHVHFDLNEHGKLDVRRAVGTSGTLSVVKDLGLRDLFTGQVEIVSGEIGEDFTYYLVSSEQVPSSVGVGVLVNPDNTILAAGGFILQLLPGTDDETITKLETNLSQVEPISKLIQKGLTPEEVLAAVLGEEPEVLETVPVRFTCNCSKERFARGIIGLGKDEIQQMIDEDGQAEAQCHFCNETYLFTKEELEALRDEI.

2 disulfides stabilise this stretch: cysteine 235–cysteine 237 and cysteine 268–cysteine 271.

This sequence belongs to the HSP33 family. In terms of processing, under oxidizing conditions two disulfide bonds are formed involving the reactive cysteines. Under reducing conditions zinc is bound to the reactive cysteines and the protein is inactive.

The protein resides in the cytoplasm. Functionally, redox regulated molecular chaperone. Protects both thermally unfolding and oxidatively damaged proteins from irreversible aggregation. Plays an important role in the bacterial defense system toward oxidative stress. The polypeptide is 33 kDa chaperonin (Bacillus licheniformis (strain ATCC 14580 / DSM 13 / JCM 2505 / CCUG 7422 / NBRC 12200 / NCIMB 9375 / NCTC 10341 / NRRL NRS-1264 / Gibson 46)).